A 291-amino-acid chain; its full sequence is tRNA U34 carboxymethyltransferase (291 aa).

Residues lysine 61, tryptophan 75, lysine 80, glycine 100, 122-124 (DPS), 149-150 (VE), tyrosine 169, and arginine 284 contribute to the carboxy-S-adenosyl-L-methionine site.

Belongs to the class I-like SAM-binding methyltransferase superfamily. CmoB family. In terms of assembly, homotetramer.

It catalyses the reaction carboxy-S-adenosyl-L-methionine + 5-hydroxyuridine(34) in tRNA = 5-carboxymethoxyuridine(34) in tRNA + S-adenosyl-L-homocysteine + H(+). In terms of biological role, catalyzes carboxymethyl transfer from carboxy-S-adenosyl-L-methionine (Cx-SAM) to 5-hydroxyuridine (ho5U) to form 5-carboxymethoxyuridine (cmo5U) at position 34 in tRNAs. In Campylobacter jejuni subsp. jejuni serotype O:23/36 (strain 81-176), this protein is tRNA U34 carboxymethyltransferase.